We begin with the raw amino-acid sequence, 635 residues long: Surface protein F (635 aa).

A signal peptide spans 1–37 (MAKYRGKPFQLYVKLSCSTMMATSIILTNILPYDAQA). Basic and acidic residues-rich tracts occupy residues 101 to 112 (NELDSKDNKSSH) and 193 to 202 (KSKDASKDTS). 2 disordered regions span residues 101–122 (NELD…SDID) and 192–228 (HKSK…SGHV). Residues 597–601 (LPKAG) carry the LPXTG sorting signal motif. Ala-600 bears the Pentaglycyl murein peptidoglycan amidated alanine mark. Residues 601–635 (GETIKEHWLPISVIVGAMGVLMIWLSRRNKLKNKA) constitute a propeptide, removed by sortase.

The protein resides in the secreted. Its subcellular location is the cell wall. The chain is Surface protein F from Staphylococcus aureus (strain NCTC 8325 / PS 47).